We begin with the raw amino-acid sequence, 374 residues long: Chaperone protein DnaJ (374 aa).

One can recognise a J domain in the interval 5-70; it reads DYYEVLGVNL…RKRASYDQFG (66 aa). Residues 133-210 form a CR-type zinc finger; it reads GLSRTIKVPT…CHGQGRQQQT (78 aa). Zn(2+) contacts are provided by Cys-146, Cys-149, Cys-162, Cys-165, Cys-184, Cys-187, Cys-198, and Cys-201. CXXCXGXG motif repeat units follow at residues 146–153, 162–169, 184–191, and 198–205; these read CKTCNGSG, CPRCNGSG, CSVCRGRG, and CTDCHGQG.

This sequence belongs to the DnaJ family. In terms of assembly, homodimer. Zn(2+) is required as a cofactor.

The protein localises to the cytoplasm. Its function is as follows. Participates actively in the response to hyperosmotic and heat shock by preventing the aggregation of stress-denatured proteins and by disaggregating proteins, also in an autonomous, DnaK-independent fashion. Unfolded proteins bind initially to DnaJ; upon interaction with the DnaJ-bound protein, DnaK hydrolyzes its bound ATP, resulting in the formation of a stable complex. GrpE releases ADP from DnaK; ATP binding to DnaK triggers the release of the substrate protein, thus completing the reaction cycle. Several rounds of ATP-dependent interactions between DnaJ, DnaK and GrpE are required for fully efficient folding. Also involved, together with DnaK and GrpE, in the DNA replication of plasmids through activation of initiation proteins. The protein is Chaperone protein DnaJ of Coxiella burnetii (strain RSA 493 / Nine Mile phase I).